The sequence spans 313 residues: Ribosomal RNA small subunit methyltransferase H (313 aa).

Residues 35 to 37, Asp-55, Phe-80, Asp-102, and Gln-109 each bind S-adenosyl-L-methionine; that span reads GGH.

This sequence belongs to the methyltransferase superfamily. RsmH family.

Its subcellular location is the cytoplasm. It carries out the reaction cytidine(1402) in 16S rRNA + S-adenosyl-L-methionine = N(4)-methylcytidine(1402) in 16S rRNA + S-adenosyl-L-homocysteine + H(+). Specifically methylates the N4 position of cytidine in position 1402 (C1402) of 16S rRNA. The polypeptide is Ribosomal RNA small subunit methyltransferase H (Shewanella frigidimarina (strain NCIMB 400)).